A 426-amino-acid chain; its full sequence is Cytochrome c biogenesis protein CcsB (426 aa).

3 consecutive transmembrane segments (helical) span residues 14-34, 72-92, and 162-182; these read LKIAILLLLVIAVSCAAGTLI, SFWFLFLLIWLGLALSVCSFR, and LGPILIHLGMILLMIGATYGS.

This sequence belongs to the Ccs1/CcsB family. May interact with CcsA.

The protein resides in the cellular thylakoid membrane. Required during biogenesis of c-type cytochromes (cytochrome c6 and cytochrome f) at the step of heme attachment. This is Cytochrome c biogenesis protein CcsB from Prochlorococcus marinus (strain NATL2A).